The primary structure comprises 670 residues: Leucine-rich repeat-containing protein 45 (670 aa).

LRR repeat units lie at residues 58 to 80 (TLCTELVLSDCMLSEEGATLLLR), 87 to 107 (VLRFLDLKGNNLRAAGAEALG), 115 to 136 (SIQSLTLEWNSLGTWDDAFATF), 145 to 166 (ALQRLDLRNNQISHKGAEELAL), 173 to 194 (TLQQLDLRWNNVGLLGGRALMN), and 201 to 212 (TLWRLDLAGNNI). The stretch at 252–645 (REEKSKQFLD…IARIRDEEAQ (394 aa)) forms a coiled coil. Residue Ser-661 is modified to Phosphoserine; by NEK2.

In terms of assembly, homomer. Interacts with CROCC/rootletin and CEP250. Interacts with CEP44. Interacts with CCDC102B (via N-terminus). In terms of processing, phosphorylated by NEK2 during misosis, phosphorylation reduces centrosomal localization which subsequently leads to centrosome separation.

Its subcellular location is the cytoplasm. The protein localises to the cytoskeleton. The protein resides in the microtubule organizing center. It is found in the centrosome. Functionally, component of the proteinaceous fiber-like linker between two centrioles, required for centrosome cohesion. The chain is Leucine-rich repeat-containing protein 45 (LRRC45) from Homo sapiens (Human).